The primary structure comprises 98 residues: NADH-ubiquinone oxidoreductase chain 4L (98 aa).

The next 3 helical transmembrane spans lie at 1 to 21 (MTLI…GLLM), 29 to 49 (ALLC…LTIL), and 61 to 81 (IILL…LVMV).

Belongs to the complex I subunit 4L family. As to quaternary structure, core subunit of respiratory chain NADH dehydrogenase (Complex I) which is composed of 45 different subunits.

It localises to the mitochondrion inner membrane. It catalyses the reaction a ubiquinone + NADH + 5 H(+)(in) = a ubiquinol + NAD(+) + 4 H(+)(out). Core subunit of the mitochondrial membrane respiratory chain NADH dehydrogenase (Complex I) which catalyzes electron transfer from NADH through the respiratory chain, using ubiquinone as an electron acceptor. Part of the enzyme membrane arm which is embedded in the lipid bilayer and involved in proton translocation. This chain is NADH-ubiquinone oxidoreductase chain 4L (MT-ND4L), found in Balaenoptera borealis (Sei whale).